Here is a 332-residue protein sequence, read N- to C-terminus: Glycerol-3-phosphate dehydrogenase [NAD(P)+] (332 aa).

Residues S10, W11, K31, and K105 each coordinate NADPH. Sn-glycerol 3-phosphate is bound by residues K105, G136, and S138. Residue A140 participates in NADPH binding. Sn-glycerol 3-phosphate contacts are provided by K191, D244, S254, R255, and N256. K191 acts as the Proton acceptor in catalysis. An NADPH-binding site is contributed by R255. The NADPH site is built by V279 and E281.

It belongs to the NAD-dependent glycerol-3-phosphate dehydrogenase family.

The protein localises to the cytoplasm. It catalyses the reaction sn-glycerol 3-phosphate + NAD(+) = dihydroxyacetone phosphate + NADH + H(+). The enzyme catalyses sn-glycerol 3-phosphate + NADP(+) = dihydroxyacetone phosphate + NADPH + H(+). The protein operates within membrane lipid metabolism; glycerophospholipid metabolism. Catalyzes the reduction of the glycolytic intermediate dihydroxyacetone phosphate (DHAP) to sn-glycerol 3-phosphate (G3P), the key precursor for phospholipid synthesis. This Anaeromyxobacter sp. (strain K) protein is Glycerol-3-phosphate dehydrogenase [NAD(P)+].